The sequence spans 361 residues: Cobalt-precorrin-5B C(1)-methyltransferase (361 aa).

Belongs to the CbiD family.

The catalysed reaction is Co-precorrin-5B + S-adenosyl-L-methionine = Co-precorrin-6A + S-adenosyl-L-homocysteine. It participates in cofactor biosynthesis; adenosylcobalamin biosynthesis; cob(II)yrinate a,c-diamide from sirohydrochlorin (anaerobic route): step 6/10. Its function is as follows. Catalyzes the methylation of C-1 in cobalt-precorrin-5B to form cobalt-precorrin-6A. The chain is Cobalt-precorrin-5B C(1)-methyltransferase from Methanobrevibacter smithii (strain ATCC 35061 / DSM 861 / OCM 144 / PS).